The chain runs to 201 residues: Ciliary microtubule inner protein 2C (201 aa).

Belongs to the CIMIP2 family. As to quaternary structure, microtubule inner protein component of sperm flagellar doublet microtubules. As to expression, expressed in airway epithelial cells.

It localises to the cytoplasm. The protein resides in the cytoskeleton. The protein localises to the cilium axoneme. It is found in the flagellum axoneme. Functionally, microtubule inner protein (MIP) part of the dynein-decorated doublet microtubules (DMTs) in cilia axoneme, which is required for motile cilia beating. Binds to the intra-tubulin interfaces. The protein is Ciliary microtubule inner protein 2C of Homo sapiens (Human).